We begin with the raw amino-acid sequence, 234 residues long: Octanoyltransferase (234 aa).

One can recognise a BPL/LPL catalytic domain in the interval 35 to 221 (DGAPELVWFL…AFQQVFASPL (187 aa)). Residues 74 to 81 (RGGQYTYH), 150 to 152 (AIG), and 163 to 165 (GIS) contribute to the substrate site. Residue Cys-181 is the Acyl-thioester intermediate of the active site.

This sequence belongs to the LipB family.

Its subcellular location is the cytoplasm. It carries out the reaction octanoyl-[ACP] + L-lysyl-[protein] = N(6)-octanoyl-L-lysyl-[protein] + holo-[ACP] + H(+). Its pathway is protein modification; protein lipoylation via endogenous pathway; protein N(6)-(lipoyl)lysine from octanoyl-[acyl-carrier-protein]: step 1/2. In terms of biological role, catalyzes the transfer of endogenously produced octanoic acid from octanoyl-acyl-carrier-protein onto the lipoyl domains of lipoate-dependent enzymes. Lipoyl-ACP can also act as a substrate although octanoyl-ACP is likely to be the physiological substrate. The sequence is that of Octanoyltransferase from Hyphomonas neptunium (strain ATCC 15444).